A 345-amino-acid polypeptide reads, in one-letter code: Methionine import ATP-binding protein MetN (345 aa).

One can recognise an ABC transporter domain in the interval I2–I241. G38–S45 serves as a coordination point for ATP.

The protein belongs to the ABC transporter superfamily. Methionine importer (TC 3.A.1.24) family. The complex is composed of two ATP-binding proteins (MetN), two transmembrane proteins (MetI) and a solute-binding protein (MetQ).

Its subcellular location is the cell inner membrane. The catalysed reaction is L-methionine(out) + ATP + H2O = L-methionine(in) + ADP + phosphate + H(+). The enzyme catalyses D-methionine(out) + ATP + H2O = D-methionine(in) + ADP + phosphate + H(+). In terms of biological role, part of the ABC transporter complex MetNIQ involved in methionine import. Responsible for energy coupling to the transport system. This Histophilus somni (strain 129Pt) (Haemophilus somnus) protein is Methionine import ATP-binding protein MetN.